The primary structure comprises 201 residues: 3-isopropylmalate dehydratase small subunit (201 aa).

The protein belongs to the LeuD family. LeuD type 1 subfamily. As to quaternary structure, heterodimer of LeuC and LeuD.

The enzyme catalyses (2R,3S)-3-isopropylmalate = (2S)-2-isopropylmalate. It functions in the pathway amino-acid biosynthesis; L-leucine biosynthesis; L-leucine from 3-methyl-2-oxobutanoate: step 2/4. Catalyzes the isomerization between 2-isopropylmalate and 3-isopropylmalate, via the formation of 2-isopropylmaleate. The sequence is that of 3-isopropylmalate dehydratase small subunit from Pasteurella multocida (strain Pm70).